We begin with the raw amino-acid sequence, 354 residues long: Rhodopsin (354 aa).

The Extracellular segment spans residues 1–36; that stretch reads MNGTEGPNFYVPFSNKSGVVRSPFEYPQYYLAEPWQ. Residues asparagine 2 and asparagine 15 are each glycosylated (N-linked (GlcNAc...) asparagine). Residues 37 to 61 traverse the membrane as a helical segment; that stretch reads YSVLAAYMFLLILLGFPVNFLTLYV. The Cytoplasmic portion of the chain corresponds to 62 to 73; that stretch reads TIQHKKLRTPLN. The helical transmembrane segment at 74–96 threads the bilayer; the sequence is YILLNLAFANHFMVFGGFPVTMY. Residues 97-110 lie on the Extracellular side of the membrane; the sequence is SSMHGYFVFGQTGC. Cysteines 110 and 187 form a disulfide. The chain crosses the membrane as a helical span at residues 111–133; the sequence is YIEGFFATMGGEIALWSLVVLAI. The short motif at 134–136 is the 'Ionic lock' involved in activated form stabilization element; sequence ERY. Topologically, residues 134–152 are cytoplasmic; sequence ERYVVVCKPMSNFRFGENH. The helical transmembrane segment at 153 to 173 threads the bilayer; it reads AIMGVMMTWIMALACAAPPLF. The Extracellular portion of the chain corresponds to 174–202; it reads GWSRYIPEGMQCSCGVDYYTLKPEVNNES. The chain crosses the membrane as a helical span at residues 203 to 224; that stretch reads FVIYMFLVHFTIPLMIIFFCYG. The Cytoplasmic portion of the chain corresponds to 225–252; that stretch reads RLVCTVKEAAAQQQESATTQKAEKEVTR. A helical transmembrane segment spans residues 253–274; sequence MVIIMVVAFLICWVPYASVAFY. Residues 275 to 286 lie on the Extracellular side of the membrane; it reads IFSNQGTDFGPI. Residues 287-308 form a helical membrane-spanning segment; that stretch reads FMTVPAFFAKSSAIYNPVIYIV. An N6-(retinylidene)lysine modification is found at lysine 296. The Cytoplasmic segment spans residues 309–354; the sequence is LNKQFRNCMITTICCGKNPFGDDETTSAATSKTEASSVSSSQVSPA. S-palmitoyl cysteine attachment occurs at residues cysteine 322 and cysteine 323. Residues 332-354 form a disordered region; sequence ETTSAATSKTEASSVSSSQVSPA. Positions 334–354 are enriched in low complexity; it reads TSAATSKTEASSVSSSQVSPA.

This sequence belongs to the G-protein coupled receptor 1 family. Opsin subfamily. Post-translationally, contains one covalently linked retinal chromophore. Upon light absorption, the covalently bound 11-cis-retinal is converted to all-trans-retinal. After hydrolysis of the Schiff base and release of the covalently bound all-trans-retinal, active rhodopsin is regenerated by binding of a fresh molecule of 11-cis-retinal.

Its subcellular location is the membrane. The protein localises to the cell projection. The protein resides in the cilium. It is found in the photoreceptor outer segment. Photoreceptor required for image-forming vision at low light intensity. Required for photoreceptor cell viability after birth. Light-induced isomerization of 11-cis to all-trans retinal triggers a conformational change that activates signaling via G-proteins. Subsequent receptor phosphorylation mediates displacement of the bound G-protein alpha subunit by arrestin and terminates signaling. This chain is Rhodopsin (RHO), found in Ambystoma tigrinum (Eastern tiger salamander).